A 380-amino-acid polypeptide reads, in one-letter code: Calreticulin-3 (380 aa).

The N-terminal stretch at 1-19 (MVSARALLWAICVLRVALA) is a signal peptide. An N-domain region spans residues 20 to 197 (TVYFQEEFLD…GQSIESGSIE (178 aa)). Asn-42 carries an N-linked (GlcNAc...) asparagine glycan. 4 residues coordinate an alpha-D-glucoside: Tyr-109, Lys-111, Tyr-128, and Asp-135. An intrachain disulfide couples Cys-137 to Cys-163. 7 repeat units span residues 191 to 202 (IESGSIEYDWNL), 209 to 220 (EKTSLDSRDWDQ), 222 to 231 (EGSKVQDWEK), 235 to 246 (DAGASKPSDWNS), 250 to 256 (GDWLQKP), 260 to 268 (DGLKAEGID), and 270 to 280 (DVWLHQKMRPA). The 4 X approximate repeats stretch occupies residues 191-246 (IESGSIEYDWNLTSLRKTEKTSLDSRDWDQVEGSKVQDWEKHFLDAGASKPSDWNS). A P-domain region spans residues 198 to 291 (YDWNLTSLRK…YLTQYDLSEF (94 aa)). Asn-201 carries N-linked (GlcNAc...) asparagine glycosylation. The 3 X approximate repeats stretch occupies residues 250–280 (GDWLQKPPYEDGLKAEGIDKDVWLHQKMRPA). The tract at residues 292-380 (ENIGAIGLEL…FSRFHRQGEL (89 aa)) is C-domain. An alpha-D-glucoside is bound at residue Glu-300. A Prevents secretion from ER motif is present at residues 377–380 (QGEL).

It belongs to the calreticulin family. In terms of assembly, component of an EIF2 complex at least composed of CELF1/CUGBP1, CALR, CALR3, EIF2S1, EIF2S2, HSP90B1 and HSPA5. As to expression, testis specific, absent in mature sperm.

It is found in the endoplasmic reticulum lumen. CALR3 capacity for calcium-binding may be absent or much lower than that of CALR. During spermatogenesis, may act as a lectin-independent chaperone for specific client proteins such as ADAM3. Required for sperm fertility. This is Calreticulin-3 (Calr3) from Mus musculus (Mouse).